The following is a 1379-amino-acid chain: DNA-directed RNA polymerase subunit beta'' (1379 aa).

Cys-224, Cys-295, Cys-302, and Cys-305 together coordinate Zn(2+). The interval 503-524 (SVQSLSVKRRSTSKLSETNDEA) is disordered.

It belongs to the RNA polymerase beta' chain family. RpoC2 subfamily. In terms of assembly, in plastids the minimal PEP RNA polymerase catalytic core is composed of four subunits: alpha, beta, beta', and beta''. When a (nuclear-encoded) sigma factor is associated with the core the holoenzyme is formed, which can initiate transcription. Requires Zn(2+) as cofactor.

It is found in the plastid. The catalysed reaction is RNA(n) + a ribonucleoside 5'-triphosphate = RNA(n+1) + diphosphate. Its function is as follows. DNA-dependent RNA polymerase catalyzes the transcription of DNA into RNA using the four ribonucleoside triphosphates as substrates. This is DNA-directed RNA polymerase subunit beta'' from Cuscuta exaltata (Tall dodder).